A 106-amino-acid chain; its full sequence is Large ribosomal subunit protein uL24 (106 aa).

It belongs to the universal ribosomal protein uL24 family. As to quaternary structure, part of the 50S ribosomal subunit.

Its function is as follows. One of two assembly initiator proteins, it binds directly to the 5'-end of the 23S rRNA, where it nucleates assembly of the 50S subunit. Functionally, one of the proteins that surrounds the polypeptide exit tunnel on the outside of the subunit. The sequence is that of Large ribosomal subunit protein uL24 from Dechloromonas aromatica (strain RCB).